A 371-amino-acid polypeptide reads, in one-letter code: Anhydro-N-acetylmuramic acid kinase (371 aa).

Residue 9–16 (GTSMDGID) participates in ATP binding.

The protein belongs to the anhydro-N-acetylmuramic acid kinase family.

The enzyme catalyses 1,6-anhydro-N-acetyl-beta-muramate + ATP + H2O = N-acetyl-D-muramate 6-phosphate + ADP + H(+). Its pathway is amino-sugar metabolism; 1,6-anhydro-N-acetylmuramate degradation. The protein operates within cell wall biogenesis; peptidoglycan recycling. Functionally, catalyzes the specific phosphorylation of 1,6-anhydro-N-acetylmuramic acid (anhMurNAc) with the simultaneous cleavage of the 1,6-anhydro ring, generating MurNAc-6-P. Is required for the utilization of anhMurNAc either imported from the medium or derived from its own cell wall murein, and thus plays a role in cell wall recycling. This Azorhizobium caulinodans (strain ATCC 43989 / DSM 5975 / JCM 20966 / LMG 6465 / NBRC 14845 / NCIMB 13405 / ORS 571) protein is Anhydro-N-acetylmuramic acid kinase.